Reading from the N-terminus, the 260-residue chain is ProSAAS (260 aa).

Residues 1–33 (MAGSPLLWGPRAGGVGLLVLLLLGLFRPPPALC) form the signal peptide. A proSAAS(1-180) region spans residues 34 to 215 (ARPVKEPRGL…SADSEGVAAP (182 aa)). Thr-53 is a glycosylation site (O-linked (GalNAc...) threonine). A disordered region spans residues 165 to 188 (RPRPPVYDDGPAGPDAEEAGDETP). Positions 179 to 188 (DAEEAGDETP) are enriched in acidic residues. The tract at residues 221 to 260 (AADHDVGSELPPEGVLGALLRVKRLETPAPQVPARRLLPP) is C-terminal inhibitory domain; interacts with PCSK1. Residue Ser-228 is glycosylated (O-linked (GalNAc...) serine). A Sufficient for inhibition of PCSK1 motif is present at residues 239-244 (LLRVKR). O-linked (GalNAc...) threonine glycosylation is present at Thr-247.

Interacts via the C-terminal inhibitory domain with PCSK1 66 kDa form. Proteolytically cleaved in the Golgi. In terms of processing, O-glycosylated with a core 1 or possibly core 8 glycan. In terms of tissue distribution, expressed in brain and pancreas.

The protein localises to the secreted. It localises to the golgi apparatus. It is found in the trans-Golgi network. Functionally, may function in the control of the neuroendocrine secretory pathway. Proposed be a specific endogenous inhibitor of PCSK1. ProSAAS and Big PEN-LEN, both containing the C-terminal inhibitory domain, but not the further processed peptides reduce PCSK1 activity in the endoplasmic reticulum and Golgi. It reduces the activity of the 84 kDa form but not the autocatalytically derived 66 kDa form of PCSK1. Subsequent processing of proSAAS may eliminate the inhibition. Slows down convertase-mediated processing of proopiomelanocortin and proenkephalin. May control the intracellular timing of PCSK1 rather than its total level of activity. In terms of biological role, endogenous ligand for GPR171. Neuropeptide involved in the regulation of feeding. The sequence is that of ProSAAS (PCSK1N) from Homo sapiens (Human).